Consider the following 599-residue polypeptide: Elongation factor 4 (599 aa).

One can recognise a tr-type G domain in the interval 2–184 (KHIRNFSIIA…RLVRDIPAPE (183 aa)). GTP contacts are provided by residues 14–19 (DHGKST) and 131–134 (NKID).

It belongs to the TRAFAC class translation factor GTPase superfamily. Classic translation factor GTPase family. LepA subfamily.

The protein resides in the cell inner membrane. The catalysed reaction is GTP + H2O = GDP + phosphate + H(+). Required for accurate and efficient protein synthesis under certain stress conditions. May act as a fidelity factor of the translation reaction, by catalyzing a one-codon backward translocation of tRNAs on improperly translocated ribosomes. Back-translocation proceeds from a post-translocation (POST) complex to a pre-translocation (PRE) complex, thus giving elongation factor G a second chance to translocate the tRNAs correctly. Binds to ribosomes in a GTP-dependent manner. The protein is Elongation factor 4 of Yersinia pestis bv. Antiqua (strain Antiqua).